We begin with the raw amino-acid sequence, 94 residues long: Mitochondrial import receptor subunit TOM9-1 (94 aa).

The Cytoplasmic segment spans residues 1-48; it reads MAPKKIGAGKGDSSILAKISNYDIVSQGRRAACDAVYVSKKLLKSTGK. Residues 49 to 66 form a helical membrane-spanning segment; that stretch reads AAWIAGTTFLILAVPLIL. The Mitochondrial intermembrane portion of the chain corresponds to 67–94; that stretch reads ELEQDHRLGEIDFEQASLLGTPPVGAML.

This sequence belongs to the Tom22 family. As to quaternary structure, forms part of the preprotein translocase complex of the outer mitochondrial membrane (TOM complex) which consists of at least 6 different proteins (TOM5, TOM6, TOM7, TOM20, TOM22/TOM9 and TOM40). In terms of tissue distribution, expressed in roots, flowers, young cotyledons and leaves.

The protein resides in the mitochondrion outer membrane. In terms of biological role, central component of the receptor complex responsible for the recognition and translocation of cytosolically synthesized mitochondrial preproteins. Together with TOM20 functions as the transit peptide receptor at the surface of the mitochondrion outer membrane and facilitates the movement of preproteins into the translocation pore. This Arabidopsis thaliana (Mouse-ear cress) protein is Mitochondrial import receptor subunit TOM9-1 (TOM9-1).